A 62-amino-acid chain; its full sequence is DNA gyrase inhibitor YacG (62 aa).

Zn(2+) is bound by residues Cys9, Cys12, Cys27, and Cys31. Over residues 43-53 the composition is skewed to basic and acidic residues; the sequence is GYRIPGEKAPE. The disordered stretch occupies residues 43–62; the sequence is GYRIPGEKAPESGDEEPGDE.

This sequence belongs to the DNA gyrase inhibitor YacG family. Interacts with GyrB. The cofactor is Zn(2+).

Its function is as follows. Inhibits all the catalytic activities of DNA gyrase by preventing its interaction with DNA. Acts by binding directly to the C-terminal domain of GyrB, which probably disrupts DNA binding by the gyrase. This chain is DNA gyrase inhibitor YacG, found in Citrifermentans bemidjiense (strain ATCC BAA-1014 / DSM 16622 / JCM 12645 / Bem) (Geobacter bemidjiensis).